A 324-amino-acid chain; its full sequence is Glyoxylate/hydroxypyruvate reductase B (324 aa).

Active-site residues include Arg-237 and Glu-266. The Proton donor role is filled by His-285.

This sequence belongs to the D-isomer specific 2-hydroxyacid dehydrogenase family. GhrB subfamily. As to quaternary structure, homodimer.

The protein localises to the cytoplasm. The catalysed reaction is glycolate + NADP(+) = glyoxylate + NADPH + H(+). The enzyme catalyses (R)-glycerate + NAD(+) = 3-hydroxypyruvate + NADH + H(+). It catalyses the reaction (R)-glycerate + NADP(+) = 3-hydroxypyruvate + NADPH + H(+). Catalyzes the NADPH-dependent reduction of glyoxylate and hydroxypyruvate into glycolate and glycerate, respectively. The polypeptide is Glyoxylate/hydroxypyruvate reductase B (Escherichia coli (strain SMS-3-5 / SECEC)).